The sequence spans 183 residues: Protein Syd (183 aa).

This sequence belongs to the Syd family.

The protein resides in the cell inner membrane. Functionally, interacts with the SecY protein in vivo. May bind preferentially to an uncomplexed state of SecY, thus functioning either as a chelating agent for excess SecY in the cell or as a regulatory factor that negatively controls the translocase function. This chain is Protein Syd, found in Yersinia pestis bv. Antiqua (strain Antiqua).